The following is a 290-amino-acid chain: Cilia- and flagella-associated protein 298 (290 aa).

It belongs to the CFAP298 family. Interacts with ZMYND10. As to expression, expressed in the trachea (at protein level).

It localises to the cytoplasm. The protein localises to the cytoskeleton. It is found in the cilium basal body. In terms of biological role, plays a role in motile cilium function, possibly by acting on outer dynein arm assembly. Seems to be important for initiation rather than maintenance of cilium motility. Required for correct positioning of cilia at the apical cell surface, suggesting an additional role in the planar cell polarity (PCP) pathway. May suppress canonical Wnt signaling activity. This is Cilia- and flagella-associated protein 298 from Rattus norvegicus (Rat).